The primary structure comprises 162 residues: Large ribosomal subunit protein uL10 (162 aa).

It belongs to the universal ribosomal protein uL10 family. Part of the ribosomal stalk of the 50S ribosomal subunit. The N-terminus interacts with L11 and the large rRNA to form the base of the stalk. The C-terminus forms an elongated spine to which L12 dimers bind in a sequential fashion forming a multimeric L10(L12)X complex.

In terms of biological role, forms part of the ribosomal stalk, playing a central role in the interaction of the ribosome with GTP-bound translation factors. In Borreliella afzelii (strain PKo) (Borrelia afzelii), this protein is Large ribosomal subunit protein uL10.